The chain runs to 275 residues: Protein COFACTOR ASSEMBLY OF COMPLEX C SUBUNIT B CCB2, chloroplastic (275 aa).

Residues Met-1–Arg-19 constitute a chloroplast transit peptide. Residues Ala-20–Arg-65 lie on the Stromal side of the membrane. The chain crosses the membrane as a helical span at residues Trp-66–Ile-86. The Lumenal segment spans residues Ser-87 to Ser-93. Residues Glu-94–Leu-114 form a helical membrane-spanning segment. The Stromal portion of the chain corresponds to Lys-115–Gly-275.

The protein localises to the plastid. It localises to the chloroplast thylakoid membrane. Functionally, required for the biogenesis and accumulation of native cytochrome b6 in the thylakoid membrane. Controls the conversion of apocytochrome b6 to holocytochrome b6. Required for covalent binding of the c-type heme to cytochrome b6. This Arabidopsis thaliana (Mouse-ear cress) protein is Protein COFACTOR ASSEMBLY OF COMPLEX C SUBUNIT B CCB2, chloroplastic.